Here is a 635-residue protein sequence, read N- to C-terminus: Isethionate TRAP transporter permease protein DctMQ (635 aa).

16 helical membrane-spanning segments follow: residues 38-58 (KPFLVAGMLAIIFIITFQTLY), 75-95 (TEEMARFIFIWISYLAVPVAI), 117-137 (ISWIIVDVCFLTLAATVLWQS), 154-174 (LQLPYYIPYLVLPVSFGLMAV), 192-212 (TVIGLILCAVLAAPLFIADYI), 217-237 (VLFGYFALFLVVGVPIAIGLG), 266-286 (FPIMAIPFFIAAGVFMGAGGL), 299-319 (GALPGGMALATIGTCMFFAAI), 350-370 (AIVAAAGAIGVMIPPSNPFVV), 379-399 (IGKLFMGGIVPGLLTGLALMA), 431-451 (WALMVPVIVLGGIYGGIMTPT), 453-473 (AAALAAFYGLIIGCFVHRELS), 481-501 (VVEAAGTSAMVIVLMSMATIF), 526-546 (IAILLMINVLLLIIGTFMEAL), 572-592 (IIMVVNLAIGFVTPPVGVNLF), and 609-629 (VLPLIALMLAVLLITTYVPAI).

It in the N-terminal section; belongs to the TRAP transporter small permease family. In the C-terminal section; belongs to the TRAP transporter large permease family. In terms of assembly, the complex comprises the periplasmic solute receptor protein DctP, and the fused transmembrane protein DctMQ.

Its subcellular location is the cell inner membrane. It functions in the pathway organosulfur degradation; alkanesulfonate degradation. Its function is as follows. Part of the tripartite ATP-independent periplasmic (TRAP) transport system DctPQM involved in the uptake of isethionate (2-hydroxyethanesulfonate), which is then catabolized by enzymes encoded by adjacent genes in the locus. Thereby is involved in an anaerobic respiration pathway that converts the sulfonate isethionate to ammonia, acetate and sulfide. The protein is Isethionate TRAP transporter permease protein DctMQ of Oleidesulfovibrio alaskensis (strain ATCC BAA-1058 / DSM 17464 / G20) (Desulfovibrio alaskensis).